Here is a 249-residue protein sequence, read N- to C-terminus: Anamorsin homolog (249 aa).

Positions methionine 1–phenylalanine 130 are N-terminal SAM-like domain. The tract at residues alanine 131–lysine 161 is linker. Residues cysteine 172, cysteine 181, cysteine 184, and cysteine 186 each contribute to the [2Fe-2S] cluster site. A fe-S binding site A region spans residues cysteine 172–cysteine 186. 4 residues coordinate [4Fe-4S] cluster: cysteine 210, cysteine 213, cysteine 221, and cysteine 224. 2 consecutive short sequence motifs (cx2C motif) follow at residues cysteine 210 to cysteine 213 and cysteine 221 to cysteine 224. The fe-S binding site B stretch occupies residues cysteine 210–cysteine 224.

The protein belongs to the anamorsin family. Monomer. [2Fe-2S] cluster is required as a cofactor. The cofactor is [4Fe-4S] cluster.

Its subcellular location is the cytoplasm. It is found in the mitochondrion intermembrane space. Component of the cytosolic iron-sulfur (Fe-S) protein assembly (CIA) machinery. Required for the maturation of extramitochondrial Fe-S proteins. Part of an electron transfer chain functioning in an early step of cytosolic Fe-S biogenesis, facilitating the de novo assembly of a [4Fe-4S] cluster on the cytosolic Fe-S scaffold complex. Electrons are transferred from NADPH via a FAD- and FMN-containing diflavin oxidoreductase. Together with the diflavin oxidoreductase, also required for the assembly of the diferric tyrosyl radical cofactor of ribonucleotide reductase (RNR), probably by providing electrons for reduction during radical cofactor maturation in the catalytic small subunit. This chain is Anamorsin homolog, found in Drosophila grimshawi (Hawaiian fruit fly).